Here is a 630-residue protein sequence, read N- to C-terminus: Betaine/ectoine transporter LcoP (630 aa).

A compositionally biased stretch (polar residues) spans 1 to 13 (MSTNSGNNLPESQ). The segment at 1–28 (MSTNSGNNLPESQESPEEPHYPHDTHPG) is disordered. Positions 17–26 (EEPHYPHDTH) are enriched in basic and acidic residues. Helical transmembrane passes span 47–67 (TVFGVTAALILAFIAWGISSP), 85–105 (TGWLLNFVMLIGIGTMLYIAF), 125–145 (FSWIAMMFGAGIGVGIFFFGP), 177–197 (FHWGLSAWGLYALVGGALAYS), 230–250 (MAIIATLFGTAATLGLSAIQV), 267–287 (ILIAIIAILTIGFIISSVSGV), 299–319 (ISLTLGLVLFVFITGPTLFLL), 354–374 (WTAFYWAWWIAWTPFVGMFIA), 385–405 (FALITMAIPSFILILAFTIFG), 436–456 (LPLYSITPFILIFVLAVFFVT), 479–499 (LIVVFWGLCMMGIAVVMLLTG), and 510–530 (LTILIAIPFALVLIVMAIAFI). The disordered stretch occupies residues 611–630 (WADGWTPESTEEGEVDAKKD).

This sequence belongs to the BCCT transporter (TC 2.A.15) family.

The protein localises to the cell membrane. Uptake is activated by hyperosmotic stress. Shows a small but significant chill stimulation around 15 degrees Celsius. In terms of biological role, involved in the uptake of osmoprotectants. Can transport betaine and ectoine. Na(+) is probably the coupling ion. The chain is Betaine/ectoine transporter LcoP from Corynebacterium glutamicum (strain ATCC 13032 / DSM 20300 / JCM 1318 / BCRC 11384 / CCUG 27702 / LMG 3730 / NBRC 12168 / NCIMB 10025 / NRRL B-2784 / 534).